The sequence spans 332 residues: Holliday junction branch migration complex subunit RuvB (332 aa).

Residues 1-181 (MSRILDNEMM…FGITGHMEYY (181 aa)) form a large ATPase domain (RuvB-L) region. Residues leucine 20, arginine 21, glycine 62, lysine 65, threonine 66, threonine 67, 128 to 130 (EDF), arginine 171, tyrosine 181, and arginine 218 contribute to the ATP site. Residue threonine 66 coordinates Mg(2+). Positions 182–252 (AHADLTEIVE…ITDKALTMLD (71 aa)) are small ATPAse domain (RuvB-S). The tract at residues 255–332 (HEGLDYVDQK…EHLGYEYSEK (78 aa)) is head domain (RuvB-H). Residues arginine 291, arginine 310, arginine 312, and arginine 315 each contribute to the DNA site.

The protein belongs to the RuvB family. In terms of assembly, homohexamer. Forms an RuvA(8)-RuvB(12)-Holliday junction (HJ) complex. HJ DNA is sandwiched between 2 RuvA tetramers; dsDNA enters through RuvA and exits via RuvB. An RuvB hexamer assembles on each DNA strand where it exits the tetramer. Each RuvB hexamer is contacted by two RuvA subunits (via domain III) on 2 adjacent RuvB subunits; this complex drives branch migration. In the full resolvosome a probable DNA-RuvA(4)-RuvB(12)-RuvC(2) complex forms which resolves the HJ.

Its subcellular location is the cytoplasm. It carries out the reaction ATP + H2O = ADP + phosphate + H(+). The RuvA-RuvB-RuvC complex processes Holliday junction (HJ) DNA during genetic recombination and DNA repair, while the RuvA-RuvB complex plays an important role in the rescue of blocked DNA replication forks via replication fork reversal (RFR). RuvA specifically binds to HJ cruciform DNA, conferring on it an open structure. The RuvB hexamer acts as an ATP-dependent pump, pulling dsDNA into and through the RuvAB complex. RuvB forms 2 homohexamers on either side of HJ DNA bound by 1 or 2 RuvA tetramers; 4 subunits per hexamer contact DNA at a time. Coordinated motions by a converter formed by DNA-disengaged RuvB subunits stimulates ATP hydrolysis and nucleotide exchange. Immobilization of the converter enables RuvB to convert the ATP-contained energy into a lever motion, pulling 2 nucleotides of DNA out of the RuvA tetramer per ATP hydrolyzed, thus driving DNA branch migration. The RuvB motors rotate together with the DNA substrate, which together with the progressing nucleotide cycle form the mechanistic basis for DNA recombination by continuous HJ branch migration. Branch migration allows RuvC to scan DNA until it finds its consensus sequence, where it cleaves and resolves cruciform DNA. The protein is Holliday junction branch migration complex subunit RuvB of Streptococcus pneumoniae serotype 4 (strain ATCC BAA-334 / TIGR4).